The chain runs to 283 residues: Aquaporin PIP2-5 (283 aa).

2 consecutive transmembrane segments (helical) span residues 37–57 (AVIA…ATVI) and 74–94 (CGGV…FILV). The short motif at 106–108 (NPA) is the NPA 1 element. 3 helical membrane-spanning segments follow: residues 125 to 145 (ILYI…VKGF), 167 to 187 (GTGL…VFSA), and 199 to 219 (VPVL…LATI). The NPA 2 motif lies at 227-229 (NPA). A helical transmembrane segment spans residues 249 to 269 (IFWVGPFIGAAIAALYHQIVL).

The protein belongs to the MIP/aquaporin (TC 1.A.8) family. PIP (TC 1.A.8.11) subfamily. As to expression, expressed in roots.

The protein resides in the cell membrane. Its function is as follows. Water channel required to facilitate the transport of water across cell membrane. May play a role in root water uptake. The polypeptide is Aquaporin PIP2-5 (PIP2-5) (Oryza sativa subsp. japonica (Rice)).